The following is a 637-amino-acid chain: Sodium-dependent proline transporter (637 aa).

At 1–45 (MKKLQEAHLRKPITPDLLMTPSDQGDVDLDVDFAADRGNWTGKLD) the chain is on the cytoplasmic side. T20 is modified (phosphothreonine). S22 carries the post-translational modification Phosphoserine. 3 helical membrane passes run 46–66 (FLLS…FPYR), 74–93 (AFLV…LFFL), and 117–137 (GAGA…NMII). The Extracellular segment spans residues 138-214 (AYVLFYLFAS…QGIGRPGEIR (77 aa)). N182 carries an N-linked (GlcNAc...) asparagine glycan. A run of 9 helical transmembrane segments spans residues 215 to 233 (WNLC…LCIL), 242 to 259 (VVYF…MLLV), 295 to 312 (IFYS…FASY), 324 to 345 (FIVT…FSVL), 378 to 397 (LPLS…TLGL), 425 to 443 (VFSG…ILTT), 459 to 479 (SFGL…VYGI), 500 to 519 (ACWL…YSIV), and 538 to 556 (LGIL…GMLV). At 557–637 (AVLREEGSLW…IAEEEEESMM (81 aa)) the chain is on the cytoplasmic side. Phosphoserine occurs at positions 573 and 582. A Phosphothreonine modification is found at T588. The residue at position 591 (Y591) is a Phosphotyrosine. Phosphoserine is present on residues S598 and S600.

It belongs to the sodium:neurotransmitter symporter (SNF) (TC 2.A.22) family. SLC6A7 subfamily.

It localises to the synaptic cell membrane. It carries out the reaction L-proline(out) + chloride(out) + 2 Na(+)(out) = L-proline(in) + chloride(in) + 2 Na(+)(in). The catalysed reaction is L-pipecolate(out) + chloride(out) + 2 Na(+)(out) = L-pipecolate(in) + chloride(in) + 2 Na(+)(in). In terms of biological role, brain specific sodium (and chloride)-dependent proline transporter. Terminates the action of proline by its high affinity sodium-dependent reuptake into presynaptic terminals. The chain is Sodium-dependent proline transporter from Mus musculus (Mouse).